Consider the following 302-residue polypeptide: Lipoyl synthase (302 aa).

Positions 44, 49, 55, 70, 74, 77, and 283 each coordinate [4Fe-4S] cluster. One can recognise a Radical SAM core domain in the interval 56–272 (WSKKHATVMI…AKVARSKGFL (217 aa)).

This sequence belongs to the radical SAM superfamily. Lipoyl synthase family. [4Fe-4S] cluster serves as cofactor.

Its subcellular location is the cytoplasm. It catalyses the reaction [[Fe-S] cluster scaffold protein carrying a second [4Fe-4S](2+) cluster] + N(6)-octanoyl-L-lysyl-[protein] + 2 oxidized [2Fe-2S]-[ferredoxin] + 2 S-adenosyl-L-methionine + 4 H(+) = [[Fe-S] cluster scaffold protein] + N(6)-[(R)-dihydrolipoyl]-L-lysyl-[protein] + 4 Fe(3+) + 2 hydrogen sulfide + 2 5'-deoxyadenosine + 2 L-methionine + 2 reduced [2Fe-2S]-[ferredoxin]. Its pathway is protein modification; protein lipoylation via endogenous pathway; protein N(6)-(lipoyl)lysine from octanoyl-[acyl-carrier-protein]: step 2/2. Catalyzes the radical-mediated insertion of two sulfur atoms into the C-6 and C-8 positions of the octanoyl moiety bound to the lipoyl domains of lipoate-dependent enzymes, thereby converting the octanoylated domains into lipoylated derivatives. The polypeptide is Lipoyl synthase (Orientia tsutsugamushi (strain Boryong) (Rickettsia tsutsugamushi)).